We begin with the raw amino-acid sequence, 314 residues long: Acetyl-coenzyme A carboxylase carboxyl transferase subunit beta (314 aa).

Residues 37–307 enclose the CoA carboxyltransferase N-terminal domain; sequence LWQKCPACDT…MSLPSIDSEA (271 aa). Cys41, Cys44, Cys60, and Cys63 together coordinate Zn(2+). Residues 41–63 form a C4-type zinc finger; it reads CPACDTLTYTKDLQQNWQVCPSC.

The protein belongs to the AccD/PCCB family. In terms of assembly, acetyl-CoA carboxylase is a heterohexamer composed of biotin carboxyl carrier protein (AccB), biotin carboxylase (AccC) and two subunits each of ACCase subunit alpha (AccA) and ACCase subunit beta (AccD). Zn(2+) serves as cofactor.

The protein localises to the cytoplasm. The catalysed reaction is N(6)-carboxybiotinyl-L-lysyl-[protein] + acetyl-CoA = N(6)-biotinyl-L-lysyl-[protein] + malonyl-CoA. The protein operates within lipid metabolism; malonyl-CoA biosynthesis; malonyl-CoA from acetyl-CoA: step 1/1. Component of the acetyl coenzyme A carboxylase (ACC) complex. Biotin carboxylase (BC) catalyzes the carboxylation of biotin on its carrier protein (BCCP) and then the CO(2) group is transferred by the transcarboxylase to acetyl-CoA to form malonyl-CoA. The protein is Acetyl-coenzyme A carboxylase carboxyl transferase subunit beta of Synechococcus sp. (strain JA-2-3B'a(2-13)) (Cyanobacteria bacterium Yellowstone B-Prime).